The sequence spans 73 residues: Excelsatoxin A (73 aa).

The signal sequence occupies residues 1–20 (MRFALVAAITIALLVAGSVA). Positions 21–37 (DESSEDIDNIVIKTPLD) are excised as a propeptide. Disulfide bonds link C41-C58, C46-C60, and C54-C69.

Belongs to the gympietide family. As to expression, expressed in trichomes, that are stiff epidermal hairs located on the surface of petioles and leaves. Not expressed in other aerial parts.

It localises to the secreted. Neurotoxin certainly responsible for the defensive, persistent, and painful stings of the giant stinging tree. Inhibits inactivation of Nav1.7/SCN9A sodium channel in sensory neurons by directly interacting with TMEM233, a newly described Nav-interacting protein. Has virtually no effect on Nav1.7/SCN9A function in heterologous expression systems and in neurons that do not express TMEM233. Also weakly but significantly affects Nav1.8/SCN10A. Coexpression of TMEM233 with Nav also confers ExTxA sensitivity to Nav1.1-Nav1.6. On the Nav1.7/SCN9A channel, causes a significant hyperpolarizing shift in the voltage dependence of activation. Its effects on Nav currents are irreversible, with no apparent reduction in activity even after repeated wash steps over 30 minutes. Does not show activity on Nav1.9/SCN11A. Does not show insecticidal activities. In vivo, induces nocifensive behavior in mice (licking or biting and shaking or lifting of the affected paw) lasting for approximately 1 hour. The chain is Excelsatoxin A from Dendrocnide excelsa (Giant stinging tree).